The primary structure comprises 365 residues: Fructose-1,6-bisphosphate aldolase/phosphatase (365 aa).

Catalysis depends on Asp11, which acts as the Proton acceptor; for FBP phosphatase activity. Positions 11, 18, 52, and 53 each coordinate Mg(2+). Residue His18 participates in beta-D-fructose 1,6-bisphosphate binding. His18 serves as a coordination point for dihydroxyacetone phosphate. Residue Tyr90 participates in beta-D-fructose 1,6-bisphosphate binding. Gln94 is a binding site for Mg(2+). 103 to 104 provides a ligand contact to beta-D-fructose 1,6-bisphosphate; that stretch reads GN. Asp131 is a binding site for Mg(2+). Residue Lys132 coordinates beta-D-fructose 1,6-bisphosphate. Lys132 provides a ligand contact to dihydroxyacetone phosphate. Tyr228 acts as the Proton donor/acceptor; for FBP aldolase activity in catalysis. Residues Lys231, Asp232, and Asp233 each contribute to the Mg(2+) site. Lys231 functions as the Schiff-base intermediate with DHAP; for FBP aldolase activity in the catalytic mechanism. Residues 241–242, Arg265, Asp286, and Tyr347 each bind beta-D-fructose 1,6-bisphosphate; that span reads QS. Residues Arg265 and Asp286 each coordinate dihydroxyacetone phosphate.

This sequence belongs to the FBP aldolase/phosphatase family. As to quaternary structure, homooctamer; dimer of tetramers. It depends on Mg(2+) as a cofactor.

It carries out the reaction beta-D-fructose 1,6-bisphosphate + H2O = beta-D-fructose 6-phosphate + phosphate. It catalyses the reaction beta-D-fructose 1,6-bisphosphate = D-glyceraldehyde 3-phosphate + dihydroxyacetone phosphate. It participates in carbohydrate biosynthesis; gluconeogenesis. Its function is as follows. Catalyzes two subsequent steps in gluconeogenesis: the aldol condensation of dihydroxyacetone phosphate (DHAP) and glyceraldehyde-3-phosphate (GA3P) to fructose-1,6-bisphosphate (FBP), and the dephosphorylation of FBP to fructose-6-phosphate (F6P). The chain is Fructose-1,6-bisphosphate aldolase/phosphatase from Methanothermobacter marburgensis (strain ATCC BAA-927 / DSM 2133 / JCM 14651 / NBRC 100331 / OCM 82 / Marburg) (Methanobacterium thermoautotrophicum).